A 703-amino-acid chain; its full sequence is DNA ligase (703 aa).

Residues M1–A20 form a disordered region. The span at S9–A20 shows a compositional bias: low complexity. Residues D53–D57, S102–I103, and E139 each bind NAD(+). The active-site N6-AMP-lysine intermediate is K141. Residues R162, E200, K321, and K345 each coordinate NAD(+). Residues C439, C442, C457, and C463 each contribute to the Zn(2+) site. Residues Q622 to R703 form the BRCT domain.

Belongs to the NAD-dependent DNA ligase family. LigA subfamily. Mg(2+) serves as cofactor. It depends on Mn(2+) as a cofactor.

The enzyme catalyses NAD(+) + (deoxyribonucleotide)n-3'-hydroxyl + 5'-phospho-(deoxyribonucleotide)m = (deoxyribonucleotide)n+m + AMP + beta-nicotinamide D-nucleotide.. Its function is as follows. DNA ligase that catalyzes the formation of phosphodiester linkages between 5'-phosphoryl and 3'-hydroxyl groups in double-stranded DNA using NAD as a coenzyme and as the energy source for the reaction. It is essential for DNA replication and repair of damaged DNA. In Delftia acidovorans (strain DSM 14801 / SPH-1), this protein is DNA ligase.